A 682-amino-acid chain; its full sequence is Pneumocandin biosynthesis cluster protein B (682 aa).

Residues 63–73 show a composition bias toward low complexity; the sequence is SSLSSTEVTSS. 3 disordered regions span residues 63–86, 107–129, and 251–358; these read SSLS…DAPE, QNTP…DTNQ, and SEST…SPAN. 2 stretches are compositionally biased toward polar residues: residues 257–279 and 310–320; these read NTGS…SHSS and PRQTTEATPCD. Over residues 335–349 the composition is skewed to basic and acidic residues; sequence PERRSMKMVRKEARD.

In terms of biological role, part of the gene cluster that mediates the biosynthesis of pneumocandins, lipohexapeptides of the echinocandin family that prevent fungal cell wall formation by non-competitive inhibition of beta-1,3-glucan synthase. The 10,12-dimethylmyristoyl side chain is synthesized by the reducing polyketide synthase gloL/GLPKS4. The thioesterase gloN/GLHYD exclusively interacts with gloL/GLPKS4 to maintain turnover of the polyketide side chain. The 10R,12S-dimethylmyristic acid is then transferred to the first thiolation domain of the nonribosomal peptide synthetase gloA/GLNRPS4 by the acyl-AMP ligase gloD/GLligase, followed by its acylation to L-ornithine to trigger elongation of the cyclic hexapeptide. L-ornithine, 4R-hydroxyl-L-proline (generated from L-proline by the dioxygenase gloF/GLOXY2), 3S-hydroxyl-L-homotyrosine (generated by gloG/GLHtyB, gloH/GLHtyA, gloI/GLHtyC, gloJ/GLHtyD and hydroxylated at C-3 by the dioxygenase gloM/GLOXY1), 3R-hydroxyl-L-glutamine (generated from L-glutamine probably by the dioxygenase gloE/GLOXY3) and 3S-hydroxyl-L-proline (generated from L-proline by the dioxygenase gloF/GLOXY2 to yield pneumocandin B0), or 3S-hydroxyl-4S-methyl-L-proline (generated from L-leucine by the dioxygenase gloC/GLOXY4 to yield pneumocandin A0) are sequentially added to the growing chain. The last C domain of gloA/GLNRPS4 is proposed to be responsible for cyclization by condensation to form the peptide bond between L-ornithine and 3S-hydroxyl-4S-methyl-L-proline (for pneumocandin A0) or 3S-hydroxyl-L-proline (for pneumocandin B0). Finally, the subsequent C-4 hydroxylation of 3S-hydroxyl-L-homotyrosine and L-ornithine dihydroxylation at C-4 and C-5 are performed by the cytochrome P450 monooxygenases gloP/GLP450-1 and gloO/GLP450-2, respectively. The polypeptide is Pneumocandin biosynthesis cluster protein B (Glarea lozoyensis (strain ATCC 20868 / MF5171)).